A 124-amino-acid chain; its full sequence is Large ribosomal subunit protein bL12 (124 aa).

Belongs to the bacterial ribosomal protein bL12 family. Homodimer. Part of the ribosomal stalk of the 50S ribosomal subunit. Forms a multimeric L10(L12)X complex, where L10 forms an elongated spine to which 2 to 4 L12 dimers bind in a sequential fashion. Binds GTP-bound translation factors.

Its function is as follows. Forms part of the ribosomal stalk which helps the ribosome interact with GTP-bound translation factors. Is thus essential for accurate translation. This Burkholderia lata (strain ATCC 17760 / DSM 23089 / LMG 22485 / NCIMB 9086 / R18194 / 383) protein is Large ribosomal subunit protein bL12.